A 240-amino-acid polypeptide reads, in one-letter code: Serine protease SplB (240 aa).

An N-terminal signal peptide occupies residues 1–36 (MNKNVVIKSLATLTILTSVTGIGTTLVEEVQQTAKA). Catalysis depends on charge relay system residues histidine 75, aspartate 113, and serine 193.

The protein belongs to the peptidase S1B family.

The protein localises to the secreted. Its function is as follows. Serine protease that cleaves specifically after the sequence Trp-Glu-Leu-Gln. This chain is Serine protease SplB (splB), found in Staphylococcus aureus (strain Mu3 / ATCC 700698).